The chain runs to 754 residues: Protein neuralized (754 aa).

Residues 106–260 (PLQFHSVHGD…NCTGIEFLDS (155 aa)) form the NHR 1 domain. The segment covering 280–297 (QQQQMPQPAANASSALNS) has biased composition (low complexity). Residues 280–308 (QQQQMPQPAANASSALNSHHPHQQSRRSL) form a disordered region. A phosphoserine mark is found at Ser-338 and Ser-341. An NHR 2 domain is found at 368–523 (PVPFHNTKGR…STQSLRMFRQ (156 aa)). The segment at 701-742 (CTICYENPIDSVLYMCGHMCMCYDCAIEQWRGVGGGQCPLCR) adopts an RING-type zinc-finger fold.

Its subcellular location is the nucleus. In terms of biological role, involved in neurogenesis. Interacts with other neurogenic proteins in the specification of the neuroblast versus epidermoblast cell fate. This chain is Protein neuralized (neur), found in Drosophila melanogaster (Fruit fly).